The following is a 155-amino-acid chain: MGPGDFRRCRERISQGLQGLPGRAELWFPPRPACDFFGDGRSTDIQEEALAASPLLEDLRRRLTRAFQWAVQRAISRRVQEAAAAAAAREEQSWTGVEATLARLRAELVEMHFQNHQLARTLLDLNMKVQQLKKEYELEITSDSQSPKDDAANPE.

The protein is Alanine- and arginine-rich domain-containing protein (AARD) of Homo sapiens (Human).